The sequence spans 89 residues: Small ribosomal subunit protein uS14A (89 aa).

This sequence belongs to the universal ribosomal protein uS14 family. As to quaternary structure, part of the 30S ribosomal subunit. Contacts proteins S3 and S10.

Binds 16S rRNA, required for the assembly of 30S particles and may also be responsible for determining the conformation of the 16S rRNA at the A site. This Lactococcus lactis subsp. lactis (strain IL1403) (Streptococcus lactis) protein is Small ribosomal subunit protein uS14A.